The chain runs to 244 residues: ATP synthase subunit a (244 aa).

Helical transmembrane passes span 20–40 (FFDV…VIVI), 81–101 (GILF…LNVM), 113–133 (QLLV…IWGF), 140–160 (FLNI…LVFI), 176–196 (LFAN…AAIY), 202–222 (FIGI…LGIA), and 223–243 (FLQA…IINL).

The protein belongs to the ATPase A chain family. F-type ATPases have 2 components, CF(1) - the catalytic core - and CF(0) - the membrane proton channel. CF(1) has five subunits: alpha(3), beta(3), gamma(1), delta(1), epsilon(1). CF(0) has three main subunits: a, b and c.

It localises to the mitochondrion inner membrane. Mitochondrial membrane ATP synthase (F(1)F(0) ATP synthase or Complex V) produces ATP from ADP in the presence of a proton gradient across the membrane which is generated by electron transport complexes of the respiratory chain. F-type ATPases consist of two structural domains, F(1) - containing the extramembraneous catalytic core and F(0) - containing the membrane proton channel, linked together by a central stalk and a peripheral stalk. During catalysis, ATP synthesis in the catalytic domain of F(1) is coupled via a rotary mechanism of the central stalk subunits to proton translocation. Key component of the proton channel; it may play a direct role in the translocation of protons across the membrane. This Dictyostelium citrinum (Slime mold) protein is ATP synthase subunit a (atp6).